Consider the following 302-residue polypeptide: Calpain-1 catalytic subunit (302 aa).

The interval 1 to 114 (RESGCSFVLA…KRAGTQELDD (114 aa)) is domain III. The tract at residues 115–130 (QIQANLPDEQVLSAEE) is linker. Residues 131 to 301 (IDENFKALFR…LFKWLQLTMF (171 aa)) are domain IV. EF-hand domains follow at residues 173-206 (FSME…NRIR), 203-238 (NRIR…AGFK), and 268-302 (VRLE…TMFA). Ca(2+)-binding residues include aspartate 186, aspartate 188, asparagine 190, lysine 192, glutamate 197, aspartate 216, aspartate 218, serine 220, serine 222, and glutamate 227.

The protein belongs to the peptidase C2 family. In terms of assembly, forms a heterodimer with a small (regulatory) subunit CAPNS1. Requires Ca(2+) as cofactor. Post-translationally, the N-terminus is blocked. Undergoes calcium-induced successive autoproteolytic cleavages that generate a membrane-bound 78 kDa active form and an intracellular 75 kDa active form. Calpastatin reduces with high efficiency the transition from 78 kDa to 75 kDa calpain forms. Ubiquitous.

It localises to the cytoplasm. It is found in the cell membrane. The catalysed reaction is Broad endopeptidase specificity.. With respect to regulation, activated by micromolar concentrations of calcium and inhibited by calpastatin. Its function is as follows. Calcium-regulated non-lysosomal thiol-protease which catalyzes limited proteolysis of substrates involved in cytoskeletal remodeling and signal transduction. Proteolytically cleaves CTBP1. Cleaves and activates caspase-7 (CASP7). The chain is Calpain-1 catalytic subunit from Oryctolagus cuniculus (Rabbit).